Consider the following 157-residue polypeptide: Large ribosomal subunit protein uL11 (157 aa).

This sequence belongs to the universal ribosomal protein uL11 family. As to quaternary structure, part of the ribosomal stalk of the 50S ribosomal subunit. Interacts with L10 and the large rRNA to form the base of the stalk. L10 forms an elongated spine to which L12 dimers bind in a sequential fashion forming a multimeric L10(L12)X complex.

In terms of biological role, forms part of the ribosomal stalk which helps the ribosome interact with GTP-bound translation factors. The chain is Large ribosomal subunit protein uL11 from Archaeoglobus fulgidus (strain ATCC 49558 / DSM 4304 / JCM 9628 / NBRC 100126 / VC-16).